The sequence spans 112 residues: Protein ECM19 (112 aa).

Residues 35–57 traverse the membrane as a helical segment; sequence NTLDMVTIGIACLVGVYTGTRFF. The disordered stretch occupies residues 82–112; it reads EDGNLLKVTPSLSSTPAAPPTPPTPPTPPQQ. Positions 98 to 112 are enriched in pro residues; the sequence is AAPPTPPTPPTPPQQ.

The protein localises to the mitochondrion membrane. In terms of biological role, may be involved in cell wall organization and biogenesis. This is Protein ECM19 (ECM19) from Saccharomyces cerevisiae (strain ATCC 204508 / S288c) (Baker's yeast).